The primary structure comprises 465 residues: Putative subtilisin-like proteinase 1 (465 aa).

The N-terminal stretch at 1–17 is a signal peptide; the sequence is MILAIISLSVVICREVS. One can recognise an Inhibitor I9 domain in the interval 19–90; sequence YIVMFDQDPS…VKMVVKDSPV (72 aa). The 333-residue stretch at 115–447 folds into the Peptidase S8 domain; that stretch reads PWGLARVGGS…PSLFNANKKK (333 aa). Catalysis depends on charge relay system residues aspartate 148 and histidine 180. Cysteine 329 and cysteine 360 form a disulfide bridge. Serine 386 functions as the Charge relay system in the catalytic mechanism.

This sequence belongs to the peptidase S8 family.

The protein localises to the secreted. Its subcellular location is the extracellular space. Its function is as follows. May be involved in the degradation of proteins for nutrient acquisition or possess a regulatory function by proteolytic activation of proproteins. This Encephalitozoon cuniculi (strain GB-M1) (Microsporidian parasite) protein is Putative subtilisin-like proteinase 1 (SPL1).